A 207-amino-acid chain; its full sequence is Large ribosomal subunit protein uL4 (207 aa).

The disordered stretch occupies residues 58–78 (AGGGKKPWRQKGTGRARHGSI). Positions 63–77 (KPWRQKGTGRARHGS) are enriched in basic residues.

This sequence belongs to the universal ribosomal protein uL4 family. As to quaternary structure, part of the 50S ribosomal subunit.

In terms of biological role, one of the primary rRNA binding proteins, this protein initially binds near the 5'-end of the 23S rRNA. It is important during the early stages of 50S assembly. It makes multiple contacts with different domains of the 23S rRNA in the assembled 50S subunit and ribosome. Forms part of the polypeptide exit tunnel. The sequence is that of Large ribosomal subunit protein uL4 from Aster yellows witches'-broom phytoplasma (strain AYWB).